A 442-amino-acid chain; its full sequence is FBD-associated F-box protein At1g66310 (442 aa).

Positions 18 to 64 (VDWLRDLPESLLCHILLNLPTKDVVKTSVLSSKWRNLWRLVPGLDLD) constitute an F-box domain. Positions 363–415 (KRRTSVLSGPRRLLSSLEYVEIESPLTGEVFEMKLVSYLLENSPILKKLTINL) constitute an FBD domain.

The sequence is that of FBD-associated F-box protein At1g66310 from Arabidopsis thaliana (Mouse-ear cress).